The chain runs to 328 residues: L-lactate dehydrogenase (328 aa).

Residues valine 18, glutamate 39, lysine 46, tyrosine 71, and 85–86 (GA) contribute to the NAD(+) site. Residues glutamine 88 and arginine 94 each coordinate substrate. NAD(+) contacts are provided by residues serine 107, 124-126 (AAN), and serine 149. 126 to 129 (NPVD) lines the substrate pocket. 154–157 (DTAR) contacts substrate. Residues arginine 159 and histidine 174 each coordinate beta-D-fructose 1,6-bisphosphate. The active-site Proton acceptor is the histidine 181. Position 226 is a phosphotyrosine (tyrosine 226). Threonine 235 contributes to the substrate binding site.

Belongs to the LDH/MDH superfamily. LDH family. Homotetramer.

It localises to the cytoplasm. It carries out the reaction (S)-lactate + NAD(+) = pyruvate + NADH + H(+). Its pathway is fermentation; pyruvate fermentation to lactate; (S)-lactate from pyruvate: step 1/1. Allosterically activated by fructose 1,6-bisphosphate (FBP). Catalyzes the conversion of lactate to pyruvate. The chain is L-lactate dehydrogenase from Streptococcus mutans serotype c (strain ATCC 700610 / UA159).